The following is a 254-amino-acid chain: UstYa family oxidase phomYc' (254 aa).

A helical transmembrane segment spans residues 38–58 (LVLVLQSVLIISLLASLHILG). A glycan (N-linked (GlcNAc...) asparagine) is linked at Asn-64. The short motif at 138-142 (HQLHC) is the HXXHC 1 element. The N-linked (GlcNAc...) asparagine glycan is linked to Asn-159. An HXXHC 2 motif is present at residues 173–177 (HIDHC).

This sequence belongs to the ustYa family.

It is found in the membrane. Its pathway is mycotoxin biosynthesis. UstYa family oxidase; part of the gene cluster that mediates the biosynthesis of the phomopsins, a group of hexapeptide mycotoxins which infects lupins and causes lupinosis disease in livestock. Within the pathway, phomYc' catalyzes the desaturation of the Ile moiety into 2,3-dehydroisoleucine (dIle). The pathway starts with the processing of the precursor phomA' by several endopeptidases including kexin proteases as well as the cluster-specific S41 family peptidase phomP1 and the oligopeptidase phomG' to produce 10 identical copies of the hexapeptide Tyr-Val-Ile-Pro-Ile-Asp. After being excised from the precursor peptide, the core peptides are cyclized and modified post-translationally by enzymes encoded within the gene cluster. The timing and order of proteolysis of the phomA' precursor and PTMs are still unknown. Two tyrosinase-like enzymes, phomQ1' and phomQ2, catalyze the chlorination and hydroxylation of Tyr, respectively. PhomYb, is proposed to be involved in the construction of the macrocyclic structure. The other 4 ustYa family proteins may be involved in PTMs that generate the unique structure of phomopsin A. PhomYa' is required for the hydroxylation of C-beta of Tyr. PhomYc', phomYd', and phomYe are responsible for the biosynthesis of 2,3-dehydroisoleucine (dIle), 2,3-dehydroaspartic acid (dAsp), and 3,4-dehydroproline (dPro), respectively. While dIle formation by phomYc' is indispensable for the installation of dAsp by phomYd', the order of the other PTMs have not been elucidated yet. Most of the biosynthetic enzymes likely have broad substrate specificity, and thus, there might be a metabolic grid from a precursor to phomopsin A. The enzyme(s) responsible for the biosynthesis of 3,4-dehydrovaline (dVal) have also not been identified yet. Finally, phomM' acts as an S-adenosylmethionine-dependent alpha-N-methyltransferase that catalyzes two successive N-methylation reactions, converting N-desmethyl-phomopsin A to phomopsin A and phomopsin A further to an N,N-dimethylated congener called phomopsin E. This chain is UstYa family oxidase phomYc', found in Diaporthe leptostromiformis (Lupinosis disease fungus).